The sequence spans 365 residues: MMNVIEGILNTTLGVVFTWVGWKTYKILWKYTPYSYPNARVRAMEAKLLTEQRFNELAESRTLQNFVASLEDTDYKETLSNVSSYSVEEIERALDASLAKTYELMFKILPKRSRDFFRLMMEEWDVRNIANVVKAKLANEPASDYIIELGPMLPKVKAMAEAKTLEEILVILEGTPYEGPYQELIAGNIDVSTFETELYRMYYKKLLNYARSRKDDEKTLLTEFIKLKIDKLNLMTTLRGKLAGLSAKEIRSMLIPGGSLDVEPLLHIDSIEMTLAQLDSTEYGEFIRKVREEAEKDISVIERAFDEHLIKKVTEFDRFHPLSIAAPLAYVLKKEREVRKLRAMVKLIGDGLEPEVIKEFVGEVA.

This sequence belongs to the V-ATPase V0D/AC39 subunit family. Has multiple subunits with at least A(3), B(3), C, D, E, F, H, I and proteolipid K(x).

The protein localises to the cell membrane. In terms of biological role, component of the A-type ATP synthase that produces ATP from ADP in the presence of a proton gradient across the membrane. In Thermococcus kodakarensis (strain ATCC BAA-918 / JCM 12380 / KOD1) (Pyrococcus kodakaraensis (strain KOD1)), this protein is A-type ATP synthase subunit C.